A 210-amino-acid chain; its full sequence is Outer-membrane lipoprotein LolB (210 aa).

An N-terminal signal peptide occupies residues 1 to 29; that stretch reads MSLISNNEERSLRVRYCIAIALSALLISG. A lipid anchor (N-palmitoyl cysteine) is attached at Cys-30. A lipid anchor (S-diacylglycerol cysteine) is attached at Cys-30.

Belongs to the LolB family. As to quaternary structure, monomer.

The protein resides in the cell outer membrane. In terms of biological role, plays a critical role in the incorporation of lipoproteins in the outer membrane after they are released by the LolA protein. The polypeptide is Outer-membrane lipoprotein LolB (Coxiella burnetii (strain CbuK_Q154) (Coxiella burnetii (strain Q154))).